We begin with the raw amino-acid sequence, 352 residues long: C-C chemokine receptor type 5 (352 aa).

Topologically, residues 1-30 (MDYQVSSPTYDIDYYTSEPCQKINVKQIAG) are extracellular. At Tyr3 the chain carries Sulfotyrosine. Ser6 and Ser7 each carry an O-linked (GalNAc...) serine glycan. Sulfotyrosine is present on residues Tyr10, Tyr14, and Tyr15. Cystine bridges form between Cys20/Cys269 and Cys101/Cys178. Residues 31 to 58 (RLLPPLYSLVFIFGFVGNILVVLILINC) traverse the membrane as a helical segment. Over 59 to 68 (KRLKSMTDIY) the chain is Cytoplasmic. The helical transmembrane segment at 69–89 (LLNLAISDLLFLLTVPFWAHY) threads the bilayer. The Extracellular portion of the chain corresponds to 90 to 102 (AAAQWDFGNTMCQ). A helical transmembrane segment spans residues 103 to 124 (LLTGLYFIGFFSGIFFIILLTI). Residues 125 to 141 (DRYLAIVHAVFALKART) lie on the Cytoplasmic side of the membrane. Residues 142 to 166 (VTFGVVTSVITWVVAVFASLPGIIF) form a helical membrane-spanning segment. Residues 167-198 (TRSQREGLHYTCSSHFPYSQYQFWKNFQTLKI) lie on the Extracellular side of the membrane. The chain crosses the membrane as a helical span at residues 199–218 (VILGLVLPLLVMVICYSGIL). The Cytoplasmic segment spans residues 219 to 235 (KTLLRCRNEKKRHRAVR). Residues 236–260 (LIFTIMIVYFLFWAPYNIVLLLNTF) form a helical membrane-spanning segment. Residues 261–277 (QEFFGLNNCSSSNRLDQ) are Extracellular-facing. Residues 278-301 (AMQVTETLGMTHCCINPIIYAFVG) form a helical membrane-spanning segment. Topologically, residues 302–352 (EKFRNYLLVFFQKHIAKRFCKCCSIFQQEAPERASSVYTRSTGEQEISVGL) are cytoplasmic. Residues Cys321, Cys323, and Cys324 are each lipidated (S-palmitoyl cysteine). 4 positions are modified to phosphoserine; by BARK1: Ser336, Ser337, Ser342, and Ser349.

It belongs to the G-protein coupled receptor 1 family. As to quaternary structure, interacts with PRAF2. Efficient ligand binding to CCL3/MIP-1alpha and CCL4/MIP-1beta requires sulfation, O-glycosylation and sialic acid modifications. Glycosylation on Ser-6 is required for efficient binding of CCL4. Interacts with GRK2. Interacts with ARRB1 and ARRB2. Interacts with CNIH4. Interacts with S100A4; this interaction stimulates T-lymphocyte chemotaxis. Sulfated on at least 2 of the N-terminal tyrosines. Sulfation is required for efficient binding of the chemokines, CCL3 and CCL4. In terms of processing, palmitoylation in the C-terminal is important for cell surface expression. Post-translationally, phosphorylation on serine residues in the C-terminal is stimulated by binding CC chemokines especially by APO-RANTES. O-glycosylated, but not N-glycosylated. Ser-6 appears to be the major site even if Ser-7 may be also O-glycosylated. Also sialylated glycans present which contribute to chemokine binding. Thr-16 and Ser-17 may also be glycosylated and, if so, with small moieties such as a T-antigen.

Its subcellular location is the cell membrane. In terms of biological role, receptor for a number of inflammatory CC-chemokines including CCL3/MIP-1-alpha, CCL4/MIP-1-beta and RANTES and subsequently transduces a signal by increasing the intracellular calcium ion level. May play a role in the control of granulocytic lineage proliferation or differentiation. Participates in T-lymphocyte migration to the infection site by acting as a chemotactic receptor. The protein is C-C chemokine receptor type 5 (CCR5) of Theropithecus gelada (Gelada baboon).